Reading from the N-terminus, the 96-residue chain is Prokineticin Bm8-e (96 aa).

The signal sequence occupies residues 1 to 19 (MKCFAQIVVLLLVIAFSHG). Cystine bridges form between Cys26–Cys38, Cys32–Cys50, Cys37–Cys78, Cys60–Cys86, and Cys80–Cys95.

This sequence belongs to the AVIT (prokineticin) family. In terms of tissue distribution, expressed by the skin glands.

It is found in the secreted. Its function is as follows. Potent agonist for both PKR1/PROKR1 and PKR2/PROKR2, and inducer of a potent and long-lasting hyperalgesia. Also potentiates capsaicin-induced TRPV1 current, when tested on DRG neurons. At subnanomolar concentrations, this protein both induces potent chemotaxis of macrophages and stimulates LPS-induced production of the pro-inflammatory cytokines IL-1 and IL-12. In vivo, potently stimulates the contraction of the guinea-pig gastrointestinal (GI) smooth muscle (nanomolar concentration). This is Prokineticin Bm8-e from Bombina maxima (Giant fire-bellied toad).